The chain runs to 297 residues: GATA transcription factor 24 (297 aa).

The Tify domain occupies 73–108 (GIENGDQLTLSFQGQVYVFDRVSPEKVQAVLLLLGG). The region spanning 143–185 (RLASLLRFREKRKGRNFDKTIRYTVRKEVALRMQRKKGQFTSA) is the CCT domain. Residues 178–203 (KKGQFTSAKSSNDDSGSTGSDWGSNQ) are disordered. The segment covering 190-201 (DDSGSTGSDWGS) has biased composition (low complexity). The GATA-type zinc finger occupies 213 to 269 (QKPEVLCRHCGTSEKSTPMMRRGPDGPRTLCNACGLMWANKGTLRDLSKVPPPQTPQ).

Belongs to the type IV zinc-finger family. Class C subfamily. As to expression, predominantly expressed in shoot apices, inflorescences and roots.

It is found in the nucleus. Transcriptional activator that specifically binds 5'-GATA-3' or 5'-GAT-3' motifs within gene promoters. The polypeptide is GATA transcription factor 24 (GATA24) (Arabidopsis thaliana (Mouse-ear cress)).